The following is a 253-amino-acid chain: Trans-aconitate 2-methyltransferase (253 aa).

This sequence belongs to the methyltransferase superfamily. Tam family.

Its subcellular location is the cytoplasm. It catalyses the reaction trans-aconitate + S-adenosyl-L-methionine = (E)-3-(methoxycarbonyl)pent-2-enedioate + S-adenosyl-L-homocysteine. Functionally, catalyzes the S-adenosylmethionine monomethyl esterification of trans-aconitate. The chain is Trans-aconitate 2-methyltransferase from Klebsiella pneumoniae (strain 342).